Consider the following 933-residue polypeptide: Probable Rho-type GTPase-activating protein 4 (933 aa).

LIM zinc-binding domains lie at cysteine 22–aspartate 80 and isoleucine 81–cysteine 129. Disordered stretches follow at residues proline 181–arginine 200 and glutamate 304–threonine 338. Over residues arginine 325 to threonine 338 the composition is skewed to polar residues. Serine 353 carries the post-translational modification Phosphoserine. Disordered stretches follow at residues arginine 415–alanine 435, serine 605–glutamate 628, and glycine 641–serine 660. Positions arginine 619–glutamate 628 are enriched in polar residues. Serine 625 is modified (phosphoserine). A compositionally biased stretch (basic and acidic residues) spans arginine 643–serine 652. Phosphoserine occurs at positions 738 and 740. Positions asparagine 753 to phenylalanine 932 constitute a Rho-GAP domain.

Its function is as follows. GTPase-activating protein for Rho-type proteins. The chain is Probable Rho-type GTPase-activating protein 4 (rga4) from Schizosaccharomyces pombe (strain 972 / ATCC 24843) (Fission yeast).